The sequence spans 161 residues: Tropomyosin (161 aa).

Residues methionine 1–leucine 161 are a coiled coil. Positions glutamate 40–alanine 52 are enriched in basic and acidic residues. 2 disordered regions span residues glutamate 40–lysine 65 and glutamate 107–glutamate 134.

As to quaternary structure, homodimer.

It localises to the cytoplasm. The protein localises to the cytoskeleton. In terms of biological role, forms part of the F-actin contractile ring during cytokinesis. This Schizosaccharomyces pombe (strain 972 / ATCC 24843) (Fission yeast) protein is Tropomyosin (cdc8).